We begin with the raw amino-acid sequence, 120 residues long: Large ribosomal subunit protein uL18 (120 aa).

The protein belongs to the universal ribosomal protein uL18 family. As to quaternary structure, part of the 50S ribosomal subunit; part of the 5S rRNA/L5/L18/L25 subcomplex. Contacts the 5S and 23S rRNAs.

This is one of the proteins that bind and probably mediate the attachment of the 5S RNA into the large ribosomal subunit, where it forms part of the central protuberance. The protein is Large ribosomal subunit protein uL18 of Rhizobium etli (strain CIAT 652).